Reading from the N-terminus, the 175-residue chain is Calcineurin subunit B (175 aa).

4 EF-hand domains span residues A21–P56, A58–R88, E90–T125, and Q131–I166. 20 residues coordinate Ca(2+): D34, D36, S38, S40, E45, D66, D68, S70, D72, E77, D103, D105, D107, Y109, E114, D144, D146, D148, K150, and E155.

Belongs to the calcineurin regulatory subunit family. As to quaternary structure, composed of a catalytic subunit (A) and a regulatory subunit (B).

Functionally, regulatory subunit of calcineurin, a calcium-dependent, calmodulin stimulated protein phosphatase. Confers calcium sensitivity. The polypeptide is Calcineurin subunit B (CNB1) (Kluyveromyces lactis (strain ATCC 8585 / CBS 2359 / DSM 70799 / NBRC 1267 / NRRL Y-1140 / WM37) (Yeast)).